The sequence spans 188 residues: Peptidyl-tRNA hydrolase (188 aa).

Y15 is a binding site for tRNA. The active-site Proton acceptor is the H20. 3 residues coordinate tRNA: F66, N68, and N114.

The protein belongs to the PTH family. In terms of assembly, monomer.

It localises to the cytoplasm. The catalysed reaction is an N-acyl-L-alpha-aminoacyl-tRNA + H2O = an N-acyl-L-amino acid + a tRNA + H(+). Functionally, hydrolyzes ribosome-free peptidyl-tRNAs (with 1 or more amino acids incorporated), which drop off the ribosome during protein synthesis, or as a result of ribosome stalling. In terms of biological role, catalyzes the release of premature peptidyl moieties from peptidyl-tRNA molecules trapped in stalled 50S ribosomal subunits, and thus maintains levels of free tRNAs and 50S ribosomes. The polypeptide is Peptidyl-tRNA hydrolase (Lactococcus lactis subsp. cremoris (strain MG1363)).